We begin with the raw amino-acid sequence, 247 residues long: Adenosylcobinamide-GDP ribazoletransferase (247 aa).

Helical transmembrane passes span 34–54 (IITF…VFMV), 57–77 (AWCG…LMTG), 113–133 (GGLA…ELAL), 138–158 (ILAS…LLMY), and 194–214 (VLLL…AIFI).

The protein belongs to the CobS family. It depends on Mg(2+) as a cofactor.

The protein localises to the cell inner membrane. It carries out the reaction alpha-ribazole + adenosylcob(III)inamide-GDP = adenosylcob(III)alamin + GMP + H(+). The enzyme catalyses alpha-ribazole 5'-phosphate + adenosylcob(III)inamide-GDP = adenosylcob(III)alamin 5'-phosphate + GMP + H(+). It functions in the pathway cofactor biosynthesis; adenosylcobalamin biosynthesis; adenosylcobalamin from cob(II)yrinate a,c-diamide: step 7/7. In terms of biological role, joins adenosylcobinamide-GDP and alpha-ribazole to generate adenosylcobalamin (Ado-cobalamin). Also synthesizes adenosylcobalamin 5'-phosphate from adenosylcobinamide-GDP and alpha-ribazole 5'-phosphate. This chain is Adenosylcobinamide-GDP ribazoletransferase, found in Shigella flexneri.